The sequence spans 495 residues: MSKLNELGLAEARDALRAGETTSKDLTEACLTAIEEAGVLNAFVHHTADLALERAAAADARLAQGAAPAMCGLPIGMKDLFCTKGVASQAGSRILEGFLPEYESTVSQNLVDAGAVMLGKLNMDEFAMGSSNETSIYGDVINPWRRKDDEKPLTPGGSSGGSAAAVAADLCLAATGTDTGGSIRQPAAFTGTVGIKPTYGRCSRWGIVAFASSLDQAGPMTKSVRDAAIMLEAMSGHDPKDSTSADLAVPDFEAALSGDIRGKKIGIPKEYRMDGMPDEIEALWQTGIAMMKDAGAEIIDISLPHTKYALPAYYVIAPAEASSNLARYDGVRYGHRAKLDQGDGITEMYEKTRAEGFGPEVQRRVMVGTYVLSAGFYDAYYNRARKVRTLIKQDFETVFAQGVDAILTPATPSAAFGLGEMTDADPVAMYLNDIFTVTVNLAGLPGIAVPGGLDANGLPLGLQLIGRPWEEAELLNTAYALEQAVGFVAKPQKWW.

Catalysis depends on charge relay system residues lysine 78 and serine 158. Serine 182 (acyl-ester intermediate) is an active-site residue.

This sequence belongs to the amidase family. GatA subfamily. As to quaternary structure, heterotrimer of A, B and C subunits.

It carries out the reaction L-glutamyl-tRNA(Gln) + L-glutamine + ATP + H2O = L-glutaminyl-tRNA(Gln) + L-glutamate + ADP + phosphate + H(+). Functionally, allows the formation of correctly charged Gln-tRNA(Gln) through the transamidation of misacylated Glu-tRNA(Gln) in organisms which lack glutaminyl-tRNA synthetase. The reaction takes place in the presence of glutamine and ATP through an activated gamma-phospho-Glu-tRNA(Gln). This chain is Glutamyl-tRNA(Gln) amidotransferase subunit A, found in Roseobacter denitrificans (strain ATCC 33942 / OCh 114) (Erythrobacter sp. (strain OCh 114)).